Consider the following 709-residue polypeptide: Frizzled-6 (709 aa).

The signal sequence occupies residues 1 to 18; it reads MERSPFLLACILLPLVRG. The FZ domain occupies 19-132; sequence HSLFTCEPIT…CNRLPHCDDT (114 aa). Topologically, residues 19 to 201 are extracellular; it reads HSLFTCEPIT…SDELDFAKSF (183 aa). 5 disulfides stabilise this stretch: cysteine 24–cysteine 85, cysteine 32–cysteine 78, cysteine 69–cysteine 106, cysteine 95–cysteine 129, and cysteine 99–cysteine 123. N-linked (GlcNAc...) asparagine glycosylation occurs at asparagine 38. Residues 202–222 traverse the membrane as a helical segment; that stretch reads IGIVSIFCLCATLFTFLTFLI. The Cytoplasmic segment spans residues 223–233; that stretch reads DVRRFRYPERP. Residues 234–254 traverse the membrane as a helical segment; the sequence is IIYYSVCYSIVSLMYFVGFLL. Over 255-284 the chain is Extracellular; sequence GNSTACNKADEKLELGDTVVLGSKNKACSV. A glycan (N-linked (GlcNAc...) asparagine) is linked at asparagine 256. Residues 285–305 traverse the membrane as a helical segment; sequence VFMFLYFFTMAGTVWWVILTI. The Cytoplasmic portion of the chain corresponds to 306–324; sequence TWFLAAGRKWSCEAIEQKA. Residues 325-345 form a helical membrane-spanning segment; that stretch reads VWFHAVAWGAPGFLTVMLLAM. The Extracellular portion of the chain corresponds to 346–370; it reads NKVEGDNISGVCFVGLYDLDASRYF. N-linked (GlcNAc...) asparagine glycosylation occurs at asparagine 352. The helical transmembrane segment at 371 to 391 threads the bilayer; that stretch reads VLLPLCLCVFVGLSLLLAGII. Topologically, residues 392 to 416 are cytoplasmic; it reads SLNHVRQVIQHDGRNQEKLKKFMIR. A helical transmembrane segment spans residues 417–437; sequence IGVFSGLYLVPLVTLLGCYVY. At 438–473 the chain is on the extracellular side; it reads ELVNRITWEMTWFSDHCHQYRIPCPYQANPKARPEL. Residues 474 to 494 traverse the membrane as a helical segment; sequence ALFMIKYLMTLIVGISAVFWV. Residues 495–709 are Cytoplasmic-facing; the sequence is GSKKTCTEWA…EQGAGSHSDA (215 aa). The Lys-Thr-X-X-X-Trp motif, mediates interaction with the PDZ domain of Dvl family members signature appears at 498 to 503; that stretch reads KTCTEW. The segment covering 583–594 has biased composition (polar residues); it reads QETSTEVHTSPE. The interval 583-709 is disordered; the sequence is QETSTEVHTS…EQGAGSHSDA (127 aa). The span at 596–616 shows a compositional bias: basic and acidic residues; that stretch reads SVKEGRADRANTPSAKDRDCG. Residues 620–629 are compositionally biased toward polar residues; sequence GPSSKLSGNR. Residues 630 to 644 show a composition bias toward basic and acidic residues; the sequence is NGRESRAGGLKERSN. Residue serine 656 is modified to Phosphoserine. Positions 669 to 690 are enriched in polar residues; that stretch reads CSTSQAASSPEPTSLKGSTSLP. Basic and acidic residues predominate over residues 697 to 709; that stretch reads ARKEQGAGSHSDA.

The protein belongs to the G-protein coupled receptor Fz/Smo family. As to quaternary structure, interacts with LMBR1L. In terms of processing, ubiquitinated by ZNRF3, leading to its degradation by the proteasome. In terms of tissue distribution, expressed in both hair cells and supporting cells in the utricle, saccule, cristae and the organ of Corti in the inner ear (at protein level).

It localises to the membrane. The protein localises to the cell membrane. The protein resides in the cell surface. It is found in the apical cell membrane. Its subcellular location is the cytoplasmic vesicle membrane. It localises to the endoplasmic reticulum membrane. Functionally, receptor for Wnt proteins. Most of frizzled receptors are coupled to the beta-catenin canonical signaling pathway, which leads to the activation of disheveled proteins, inhibition of GSK-3 kinase, nuclear accumulation of beta-catenin and activation of Wnt target genes. A second signaling pathway involving PKC and calcium fluxes has been seen for some family members, but it is not yet clear if it represents a distinct pathway or if it can be integrated in the canonical pathway, as PKC seems to be required for Wnt-mediated inactivation of GSK-3 kinase. Both pathways seem to involve interactions with G-proteins. Activation by Wnt5A stimulates PKC activity via a G-protein-dependent mechanism. Involved in transduction and intercellular transmission of polarity information during tissue morphogenesis and/or in differentiated tissues. Together with FZD3, is involved in the neural tube closure and plays a role in the regulation of the establishment of planar cell polarity (PCP), particularly in the orientation of asymmetric bundles of stereocilia on the apical faces of a subset of auditory and vestibular sensory cells located in the inner ear. This is Frizzled-6 (Fzd6) from Mus musculus (Mouse).